The primary structure comprises 369 residues: 2-aminoethylphosphonate--pyruvate transaminase (369 aa).

Lys-193 carries the post-translational modification N6-(pyridoxal phosphate)lysine.

Belongs to the class-V pyridoxal-phosphate-dependent aminotransferase family. PhnW subfamily. In terms of assembly, homodimer. Pyridoxal 5'-phosphate serves as cofactor.

It carries out the reaction (2-aminoethyl)phosphonate + pyruvate = phosphonoacetaldehyde + L-alanine. Functionally, involved in phosphonate degradation. This Burkholderia thailandensis (strain ATCC 700388 / DSM 13276 / CCUG 48851 / CIP 106301 / E264) protein is 2-aminoethylphosphonate--pyruvate transaminase.